A 312-amino-acid chain; its full sequence is NAD(P)(+)--arginine ADP-ribosyltransferase 2 (312 aa).

Residues 1-20 (MELLALRWVLLAGTLLSTSA) form the signal peptide. A propeptide spanning residues 21–31 (ASSALQEGDLG) is cleaved from the precursor. 2 disulfides stabilise this stretch: Cys51–Cys260 and Cys159–Cys208. The 186-residue stretch at 71–256 (YAYAVGWRKA…IYLRSKGKMS (186 aa)) folds into the TR mART core domain. NAD(+) contacts are provided by Tyr108, Arg164, and Gln183. Residue Arg164 is part of the active site. Ser186 is an active-site residue. Ser217 is an NAD(+) binding site. Residue Glu224 is part of the active site. Positions 267–312 (GGQWGRGHQEVGLGLSPGLALPVLPCSNCSCWGSGHRAGDPIPAAV) are excised as a propeptide.

This sequence belongs to the Arg-specific ADP-ribosyltransferase family.

Its subcellular location is the secreted. It localises to the extracellular space. It catalyses the reaction L-arginyl-[protein] + NAD(+) = N(omega)-(ADP-D-ribosyl)-L-arginyl-[protein] + nicotinamide + H(+). In Gallus gallus (Chicken), this protein is NAD(P)(+)--arginine ADP-ribosyltransferase 2.